Reading from the N-terminus, the 203-residue chain is Thymidylate kinase (203 aa).

7–14 serves as a coordination point for ATP; it reads GGEGAGKT.

Belongs to the thymidylate kinase family.

It carries out the reaction dTMP + ATP = dTDP + ADP. Phosphorylation of dTMP to form dTDP in both de novo and salvage pathways of dTTP synthesis. The sequence is that of Thymidylate kinase (tmk) from Chlamydia trachomatis serovar D (strain ATCC VR-885 / DSM 19411 / UW-3/Cx).